The chain runs to 430 residues: Tol-Pal system protein TolB (430 aa).

The signal sequence occupies residues 1–21; sequence MKQALRVAFGFLILWASVLHA.

This sequence belongs to the TolB family. In terms of assembly, the Tol-Pal system is composed of five core proteins: the inner membrane proteins TolA, TolQ and TolR, the periplasmic protein TolB and the outer membrane protein Pal. They form a network linking the inner and outer membranes and the peptidoglycan layer.

It is found in the periplasm. In terms of biological role, part of the Tol-Pal system, which plays a role in outer membrane invagination during cell division and is important for maintaining outer membrane integrity. TolB occupies a key intermediary position in the Tol-Pal system because it communicates directly with both membrane-embedded components, Pal in the outer membrane and TolA in the inner membrane. The chain is Tol-Pal system protein TolB from Shigella boydii serotype 4 (strain Sb227).